A 76-amino-acid chain; its full sequence is Esculentin-2MT2 (76 aa).

Positions 1–22 (MFTLKKSMLLLFFLGTISLSLC) are cleaved as a signal peptide. A propeptide spans 23 to 37 (EEERSADEDDGEKEV) (removed in mature form). Cysteine 70 and cysteine 76 are disulfide-bonded.

It belongs to the frog skin active peptide (FSAP) family. Esculentin subfamily. As to expression, expressed by the skin glands.

It is found in the secreted. Antimicrobial peptide. Active against a variety of Gram-negative and Gram-positive bacterial strains. Active against fungi. Shows strong hemolytic activity against human erythrocytes. The chain is Esculentin-2MT2 from Amolops mantzorum (Sichuan torrent frog).